The following is a 352-amino-acid chain: Leukotriene B4 receptor 1 (352 aa).

The Extracellular segment spans residues 1–19 (MNTTSSAAPPSLGVEFISL). A glycan (N-linked (GlcNAc...) asparagine) is linked at Asn-2. The chain crosses the membrane as a helical span at residues 20–42 (LAIILLSVALAVGLPGNSFVVWS). Residues 43–54 (ILKRMQKRSVTA) are Cytoplasmic-facing. Residues 55-75 (LMVLNLALADLAVLLTAPFFL) form a helical membrane-spanning segment. Over 76-91 (HFLAQGTWSFGLAGCR) the chain is Extracellular. The chain crosses the membrane as a helical span at residues 92–113 (LCHYVCGVSMYASVLLITAMSL). Over 114 to 138 (DRSLAVARPFVSQKLRTKAMARRVL) the chain is Cytoplasmic. A helical membrane pass occupies residues 139 to 159 (AGIWVLSFLLATPVLAYRTVV). Over 160–178 (PWKTNMSLCFPRYPSEGHR) the chain is Extracellular. An N-linked (GlcNAc...) asparagine glycan is attached at Asn-164. The helical transmembrane segment at 179 to 199 (AFHLIFEAVTGFLLPFLAVVA) threads the bilayer. Residues 200–221 (SYSDIGRRLQARRFRRSRRTGR) lie on the Cytoplasmic side of the membrane. The chain crosses the membrane as a helical span at residues 222-242 (LVVLIILTFAAFWLPYHVVNL). Residues 243–268 (AEAGRALAGQAAGLGLVGKRLSLARN) are Extracellular-facing. Residues 269-289 (VLIALAFLSSSVNPVLYACAG) form a helical membrane-spanning segment. At 290–352 (GGLLRSAGVG…SSPLKLNELN (63 aa)) the chain is on the cytoplasmic side. 2 stretches are compositionally biased toward polar residues: residues 310 to 326 (SEAS…QTAR) and 338 to 352 (ESLT…NELN). The segment at 310–352 (SEASSTRRGGSLGQTARSGPAALEPGPSESLTASSPLKLNELN) is disordered.

Belongs to the G-protein coupled receptor 1 family. In terms of processing, phosphorylated by GRK6 upon leukotriene B4 binding; which promotes desensitization. Expressed at highest levels in heart, skeletal muscle and at lower levels in brain and liver. High level of expression in lymphoid tissues.

The protein resides in the cell membrane. Functionally, receptor for extracellular ATP &gt; UTP and ADP. The activity of this receptor is mediated by G proteins which activate a phosphatidylinositol-calcium second messenger system. May be the cardiac P2Y receptor involved in the regulation of cardiac muscle contraction through modulation of L-type calcium currents. Is a receptor for leukotriene B4, a potent chemoattractant involved in inflammation and immune response. The sequence is that of Leukotriene B4 receptor 1 (LTB4R) from Homo sapiens (Human).